The sequence spans 473 residues: Bifunctional protein HldE (473 aa).

The ribokinase stretch occupies residues 1 to 318 (MKLSMPRFDQ…RAIQREEGSE (318 aa)). 194–197 (NLSE) contributes to the ATP binding site. Asp263 is an active-site residue. Residues 343–473 (FTNGCFDILH…TAIVEKIRKN (131 aa)) form a cytidylyltransferase region.

This sequence in the N-terminal section; belongs to the carbohydrate kinase PfkB family. The protein in the C-terminal section; belongs to the cytidylyltransferase family. As to quaternary structure, homodimer.

It catalyses the reaction D-glycero-beta-D-manno-heptose 7-phosphate + ATP = D-glycero-beta-D-manno-heptose 1,7-bisphosphate + ADP + H(+). The catalysed reaction is D-glycero-beta-D-manno-heptose 1-phosphate + ATP + H(+) = ADP-D-glycero-beta-D-manno-heptose + diphosphate. Its pathway is nucleotide-sugar biosynthesis; ADP-L-glycero-beta-D-manno-heptose biosynthesis; ADP-L-glycero-beta-D-manno-heptose from D-glycero-beta-D-manno-heptose 7-phosphate: step 1/4. The protein operates within nucleotide-sugar biosynthesis; ADP-L-glycero-beta-D-manno-heptose biosynthesis; ADP-L-glycero-beta-D-manno-heptose from D-glycero-beta-D-manno-heptose 7-phosphate: step 3/4. Functionally, catalyzes the phosphorylation of D-glycero-D-manno-heptose 7-phosphate at the C-1 position to selectively form D-glycero-beta-D-manno-heptose-1,7-bisphosphate. Its function is as follows. Catalyzes the ADP transfer from ATP to D-glycero-beta-D-manno-heptose 1-phosphate, yielding ADP-D-glycero-beta-D-manno-heptose. The sequence is that of Bifunctional protein HldE from Pseudomonas putida (strain ATCC 47054 / DSM 6125 / CFBP 8728 / NCIMB 11950 / KT2440).